The chain runs to 545 residues: Chaperonin GroEL (545 aa).

ATP contacts are provided by residues 30–33, K51, 87–91, G415, and D495; these read TLGP and DGTTT.

The protein belongs to the chaperonin (HSP60) family. In terms of assembly, forms a cylinder of 14 subunits composed of two heptameric rings stacked back-to-back. Interacts with the co-chaperonin GroES.

The protein resides in the cytoplasm. The enzyme catalyses ATP + H2O + a folded polypeptide = ADP + phosphate + an unfolded polypeptide.. In terms of biological role, together with its co-chaperonin GroES, plays an essential role in assisting protein folding. The GroEL-GroES system forms a nano-cage that allows encapsulation of the non-native substrate proteins and provides a physical environment optimized to promote and accelerate protein folding. The chain is Chaperonin GroEL from Shewanella sp. (strain ANA-3).